A 57-amino-acid polypeptide reads, in one-letter code: Peptide BmKa1 (57 aa).

The N-terminal stretch at 1–22 is a signal peptide; it reads MKPRVFFLLFLLVAAMIETGES. Acidic residues-rich tracts occupy residues 20–29 and 45–57; these read GESEENEEGS and VDNE…GDSD. The segment at 20 to 57 is disordered; the sequence is GESEENEEGSNESGKSTEAKNTDASVDNEDSDIDGDSD.

This sequence belongs to the non-disulfide-bridged peptide (NDBP) superfamily. As to expression, expressed by the venom gland.

It is found in the secreted. The polypeptide is Peptide BmKa1 (Olivierus martensii (Manchurian scorpion)).